The chain runs to 448 residues: tRNA(Ile)-lysidine synthase (448 aa).

Residue Ser-25–Ser-30 coordinates ATP.

It belongs to the tRNA(Ile)-lysidine synthase family.

The protein localises to the cytoplasm. The catalysed reaction is cytidine(34) in tRNA(Ile2) + L-lysine + ATP = lysidine(34) in tRNA(Ile2) + AMP + diphosphate + H(+). Functionally, ligates lysine onto the cytidine present at position 34 of the AUA codon-specific tRNA(Ile) that contains the anticodon CAU, in an ATP-dependent manner. Cytidine is converted to lysidine, thus changing the amino acid specificity of the tRNA from methionine to isoleucine. The polypeptide is tRNA(Ile)-lysidine synthase (Brucella melitensis biotype 2 (strain ATCC 23457)).